The chain runs to 220 residues: Adenylate kinase (220 aa).

10–15 (GAGKGT) contacts ATP. Residues 30–59 (STGDMLRAAVKAGSPLGVEAKGYMDAGKLV) are NMP. AMP is bound by residues threonine 31, arginine 36, 57–59 (KLV), 85–88 (GFPR), and glutamine 92. The disordered stretch occupies residues 122–150 (GRRTHPASGRTYHVKFNPPKVEGKDDVTG). An LID region spans residues 122–159 (GRRTHPASGRTYHVKFNPPKVEGKDDVTGEPLIQRDDD). ATP-binding positions include arginine 123 and 132–133 (TY). Arginine 156 and arginine 167 together coordinate AMP. Position 206 (glycine 206) interacts with ATP.

It belongs to the adenylate kinase family. Monomer.

Its subcellular location is the cytoplasm. It catalyses the reaction AMP + ATP = 2 ADP. Its pathway is purine metabolism; AMP biosynthesis via salvage pathway; AMP from ADP: step 1/1. Functionally, catalyzes the reversible transfer of the terminal phosphate group between ATP and AMP. Plays an important role in cellular energy homeostasis and in adenine nucleotide metabolism. The chain is Adenylate kinase from Burkholderia ambifaria (strain MC40-6).